A 119-amino-acid polypeptide reads, in one-letter code: Protein SPIRAL1 (119 aa).

Residues 1–11 (MGRGNSCGGGQ) are compositionally biased toward gly residues. 2 disordered regions span residues 1–47 (MGRG…PPVT) and 85–105 (EGQNTGNFLTDRPSTKVHAAP). Residues 24–34 (APKPVPAPRPA) show a composition bias toward pro residues.

Belongs to the SPIRAL1 family. Post-translationally, ubiquitinated. Upon salt-stress induction, it is subject to proteasome-dependent degradation. In terms of tissue distribution, ubiquitous. High expression was associated with tissues undergoing rapid cell expansion, including the root elongation zone, hypocotyls of dark grown-seedlings, and cotyledons of light-grown seedlings.

It is found in the cytoplasm. Its subcellular location is the cytoskeleton. The protein resides in the phragmoplast. It localises to the spindle. In terms of biological role, required for directional control of cell elongation. Stabilizes growing ends of cortical microtubules and influences their dynamic properties. Acts redundantly with SP1Ls in maintaining the cortical microtubules organization essential for anisotropic cell growth. Plays a key role in salt stress-induced microtubules disassembly. In Arabidopsis thaliana (Mouse-ear cress), this protein is Protein SPIRAL1 (SPR1).